Reading from the N-terminus, the 229-residue chain is Probable U3 small nucleolar RNA-associated protein 11 (229 aa).

2 disordered regions span residues 1–23 and 199–229; these read MSSL…ESRK and KKPG…QRKR.

Belongs to the UTP11 family. In terms of assembly, component of the ribosomal small subunit (SSU) processome.

The protein localises to the nucleus. Its subcellular location is the nucleolus. Involved in nucleolar processing of pre-18S ribosomal RNA. The sequence is that of Probable U3 small nucleolar RNA-associated protein 11 from Oryza sativa subsp. japonica (Rice).